Reading from the N-terminus, the 213-residue chain is Small ribosomal subunit protein uS4 (213 aa).

The interval 16–53 (GTDLGLKSGVKPYDVKTKKSARPPGQHGVSRNKSSEYS) is disordered. Over residues 44–53 (VSRNKSSEYS) the composition is skewed to polar residues. Residues 97-163 (SRLDNVVYRM…EKSREQLRIK (67 aa)) enclose the S4 RNA-binding domain.

The protein belongs to the universal ribosomal protein uS4 family. As to quaternary structure, part of the 30S ribosomal subunit. Contacts protein S5. The interaction surface between S4 and S5 is involved in control of translational fidelity.

Its function is as follows. One of the primary rRNA binding proteins, it binds directly to 16S rRNA where it nucleates assembly of the body of the 30S subunit. Functionally, with S5 and S12 plays an important role in translational accuracy. This is Small ribosomal subunit protein uS4 from Psychrobacter cryohalolentis (strain ATCC BAA-1226 / DSM 17306 / VKM B-2378 / K5).